Consider the following 364-residue polypeptide: Triacylglycerol lipase (364 aa).

Positions 1–44 (MARTMRSRVVAGAVACAMSIAPFAGTTAVMTLATTHAAMAATAP) are cleaved as a signal peptide. An AB hydrolase-1 domain is found at 54 to 266 (PIILVHGLSG…AIQPTLSVFG (213 aa)). Leucine 61 contributes to the substrate binding site. The active-site Nucleophile is serine 131. Position 132 (glutamine 132) interacts with substrate. Cysteine 234 and cysteine 314 are oxidised to a cystine. Aspartate 286 contacts Ca(2+). Active-site charge relay system residues include aspartate 308 and histidine 330. Residues aspartate 332, glutamine 336, and valine 340 each contribute to the Ca(2+) site.

Belongs to the AB hydrolase superfamily. Pseudomonas lipase family. As to quaternary structure, monomer. Ca(2+) serves as cofactor.

It is found in the secreted. It catalyses the reaction a triacylglycerol + H2O = a diacylglycerol + a fatty acid + H(+). Inhibited by RC-(Rp,Sp)- and SC-(Rp,Sp)-1,2-dioctylcarbamoylglycero-3-O-p-nitrophenyl octylphosphonate. Also inhibited by diethyl-p-nitrophenylphosphate (E600). Catalyzes the hydrolysis of triacylglycerol. It shows a preference for triacylglycerols with a chain length between 6 and 12 carbons. In Burkholderia cepacia (Pseudomonas cepacia), this protein is Triacylglycerol lipase.